A 420-amino-acid chain; its full sequence is Protein STB1 (420 aa).

Ser2 is subject to N-acetylserine. The segment at 2–70 (SQPQMSPEKE…DEDHKTLLEA (69 aa)) is interaction with SWI6. Ser7 bears the Phosphoserine mark. Disordered regions lie at residues 30 to 187 (QLKL…SDNT) and 273 to 319 (DSPS…ELNG). Basic and acidic residues predominate over residues 43–55 (RKQDSTTKKRSGE). Position 72 is a phosphoserine (Ser72). Position 99 is a phosphothreonine (Thr99). Ser102 carries the phosphoserine modification. The span at 106–122 (RKAEDRSQQIKPRKEDT) shows a compositional bias: basic and acidic residues. A compositionally biased stretch (low complexity) spans 156–169 (NNNNSSNHSNNNNN). Residues 277 to 319 (LYLSNNNGSVQATLSPQQRRKPTTNTLHPPSNVPTTPSRELNG) show a composition bias toward polar residues. Phosphothreonine is present on Thr419.

Interacts with the ANK repeats of SWI6. The interaction with SWI6 is required for function. Interacts with SIN3. Post-translationally, phosphorylated by CDC28 in a cell cycle-dependent manner, inhibiting the interaction with SWI6.

Its subcellular location is the cytoplasm. It is found in the nucleus. In terms of biological role, involved in the regulation and timing of MBF-dependent transcription in late G1 of the cell cycle. The protein is Protein STB1 (STB1) of Saccharomyces cerevisiae (strain ATCC 204508 / S288c) (Baker's yeast).